Reading from the N-terminus, the 394-residue chain is Elongation factor Tu (394 aa).

The tr-type G domain maps to 10–204; the sequence is KPHINVGTIG…HLDNYIPEPK (195 aa). The tract at residues 19–26 is G1; it reads GHVDHGKT. Residue 19–26 coordinates GTP; it reads GHVDHGKT. Thr26 serves as a coordination point for Mg(2+). A G2 region spans residues 60–64; it reads GITIN. The interval 81–84 is G3; that stretch reads DCPG. Residues 81-85 and 136-139 each bind GTP; these read DCPGH and NKCD. The segment at 136–139 is G4; sequence NKCD. Residues 174–176 form a G5 region; that stretch reads SAL.

It belongs to the TRAFAC class translation factor GTPase superfamily. Classic translation factor GTPase family. EF-Tu/EF-1A subfamily. As to quaternary structure, monomer.

It is found in the cytoplasm. The catalysed reaction is GTP + H2O = GDP + phosphate + H(+). Functionally, GTP hydrolase that promotes the GTP-dependent binding of aminoacyl-tRNA to the A-site of ribosomes during protein biosynthesis. This Wigglesworthia glossinidia brevipalpis protein is Elongation factor Tu.